Here is a 639-residue protein sequence, read N- to C-terminus: Bone morphogenetic protein 1 homolog (639 aa).

The N-terminal stretch at 1 to 23 is a signal peptide; that stretch reads MDLLYYMTVSLLGFILSLTTFIG. Residues 24–109 constitute a propeptide that is removed on maturation; it reads ETTRALSDDV…RAVTARPERR (86 aa). A Peptidase M12A domain is found at 100–305; it reads RAVTARPERR…IQANLLYKCP (206 aa). N-linked (GlcNAc...) asparagine glycosylation is found at asparagine 122 and asparagine 140. Cystine bridges form between cysteine 143-cysteine 304, cysteine 167-cysteine 189, cysteine 169-cysteine 170, cysteine 307-cysteine 333, cysteine 360-cysteine 382, and cysteine 420-cysteine 446. Histidine 197 is a binding site for Zn(2+). Glutamate 198 is an active-site residue. 2 residues coordinate Zn(2+): histidine 201 and histidine 207. 2 consecutive CUB domains span residues 307-419 and 420-531; these read CGRT…YEAI and CGGH…DFFK. Asparagine 317 carries an N-linked (GlcNAc...) asparagine glycan. Asparagine 455 is a glycosylation site (N-linked (GlcNAc...) asparagine). Disulfide bonds link cysteine 473-cysteine 495, cysteine 536-cysteine 548, cysteine 544-cysteine 557, and cysteine 559-cysteine 572. Residues 532 to 573 form the EGF-like; calcium-binding domain; the sequence is EKDECAQPDQGGCMDVCVNTIGSYRCDCRPGYELSSDGRRCE.

Zn(2+) serves as cofactor. As to expression, ectodermal and primary mesenchyme cells in hatched blastula.

The sequence is that of Bone morphogenetic protein 1 homolog from Strongylocentrotus purpuratus (Purple sea urchin).